A 161-amino-acid polypeptide reads, in one-letter code: Large-conductance mechanosensitive channel (161 aa).

A run of 2 helical transmembrane segments spans residues Val14 to Leu34 and Gly85 to Val105.

This sequence belongs to the MscL family. In terms of assembly, homopentamer.

The protein resides in the cell inner membrane. In terms of biological role, channel that opens in response to stretch forces in the membrane lipid bilayer. May participate in the regulation of osmotic pressure changes within the cell. This Chlorobium luteolum (strain DSM 273 / BCRC 81028 / 2530) (Pelodictyon luteolum) protein is Large-conductance mechanosensitive channel.